We begin with the raw amino-acid sequence, 233 residues long: Large ribosomal subunit protein uL1 (233 aa).

This sequence belongs to the universal ribosomal protein uL1 family. In terms of assembly, part of the 50S ribosomal subunit.

In terms of biological role, binds directly to 23S rRNA. The L1 stalk is quite mobile in the ribosome, and is involved in E site tRNA release. Protein L1 is also a translational repressor protein, it controls the translation of the L11 operon by binding to its mRNA. The polypeptide is Large ribosomal subunit protein uL1 (Shewanella denitrificans (strain OS217 / ATCC BAA-1090 / DSM 15013)).